The following is a 113-amino-acid chain: Cell cycle protein GpsB (113 aa).

Positions isoleucine 36 to glutamine 65 form a coiled coil. Residues alanine 61–alanine 82 are disordered.

Belongs to the GpsB family. Forms polymers through the coiled coil domains. Interacts with PBP1, MreC and EzrA.

The protein resides in the cytoplasm. Its function is as follows. Divisome component that associates with the complex late in its assembly, after the Z-ring is formed, and is dependent on DivIC and PBP2B for its recruitment to the divisome. Together with EzrA, is a key component of the system that regulates PBP1 localization during cell cycle progression. Its main role could be the removal of PBP1 from the cell pole after pole maturation is completed. Also contributes to the recruitment of PBP1 to the division complex. Not essential for septum formation. This is Cell cycle protein GpsB from Streptococcus pneumoniae (strain Hungary19A-6).